A 482-amino-acid chain; its full sequence is Cis-aconitate decarboxylase-like protein oryM (482 aa).

This sequence belongs to the PrpD family.

It functions in the pathway secondary metabolite biosynthesis. Cis-aconitate decarboxylase-like protein; part of the gene cluster that mediates the biosynthesis of oryzines, natural products with an unusual maleidride backbone. The two subunits of the fungal fatty acid synthase oryfasA and oryfasB probably form octenoic acid. This fatty acid is most likely activated by the acyl-CoA ligase oryP to give octenyl-CoA before the citrate synthase-like protein oryE catalyzes condensation with oxaloacetate to form tricarboxylic acid. The next steps of the pathways are conjectural, but a favorite possible route has been proposed, beginning with decarboxylation and concomitant dehydration by the decarboxylase oryM, followed by tautomerization, which may lead to the production of a diene intermediate. Reduction of this diene intermediate could give the known metabolite piliformic acid. On the pathway to oryzine B and oryzine A, however, hydroxylation of the diene by the alpha-ketoglutarate-dependent dioxygenase oryG and lactonisation by the lactonohydrolases oryH or oryL could give oryzine B directly. Finally, enoyl reduction by the dehydrogenase oryD would then convert oryzine B into oryzine A. This chain is Cis-aconitate decarboxylase-like protein oryM, found in Aspergillus oryzae (strain ATCC 42149 / RIB 40) (Yellow koji mold).